We begin with the raw amino-acid sequence, 174 residues long: RNA pyrophosphohydrolase (174 aa).

In terms of domain architecture, Nudix hydrolase spans 6 to 150 (GFRPNVGIVI…KREVYRRVMK (145 aa)). Positions 38–59 (GGVDDGETPEQAMFRELYEEIG) match the Nudix box motif.

The protein belongs to the Nudix hydrolase family. RppH subfamily. Requires a divalent metal cation as cofactor.

Accelerates the degradation of transcripts by removing pyrophosphate from the 5'-end of triphosphorylated RNA, leading to a more labile monophosphorylated state that can stimulate subsequent ribonuclease cleavage. This chain is RNA pyrophosphohydrolase, found in Tolumonas auensis (strain DSM 9187 / NBRC 110442 / TA 4).